The chain runs to 169 residues: Large ribosomal subunit protein uL23 (169 aa).

Positions 1–20 are disordered; it reads MAGKKVKSNTPKQDLSVSKS. Positions 8 to 20 are enriched in polar residues; it reads SNTPKQDLSVSKS.

Belongs to the universal ribosomal protein uL23 family.

This protein binds to a specific region on the 26S rRNA. The chain is Large ribosomal subunit protein uL23 (rpl23a) from Dictyostelium discoideum (Social amoeba).